A 124-amino-acid polypeptide reads, in one-letter code: Translation initiation factor 5A (124 aa).

The tract at residues 27–53 is disordered; that stretch reads TSYSTSKPGKHGSAKARVEGTGVFDGQ. The residue at position 36 (K36) is a Hypusine.

It belongs to the eIF-5A family.

It localises to the cytoplasm. Functionally, functions by promoting the formation of the first peptide bond. The chain is Translation initiation factor 5A from Natronomonas pharaonis (strain ATCC 35678 / DSM 2160 / CIP 103997 / JCM 8858 / NBRC 14720 / NCIMB 2260 / Gabara) (Halobacterium pharaonis).